The following is a 488-amino-acid chain: 2,3-bisphosphoglycerate-independent phosphoglycerate mutase (488 aa).

The active-site Phosphoserine intermediate is the serine 10. Residue serine 10 participates in Mn(2+) binding. Residues histidine 69, arginine 99–aspartate 100, arginine 135, arginine 142, arginine 215–arginine 218, and lysine 290 each bind substrate. Residues aspartate 359, histidine 363, aspartate 400, histidine 401, and histidine 430 each coordinate Mn(2+).

Belongs to the BPG-independent phosphoglycerate mutase family. Monomer. Requires Mn(2+) as cofactor.

The protein localises to the cytoplasm. It carries out the reaction (2R)-2-phosphoglycerate = (2R)-3-phosphoglycerate. The protein operates within carbohydrate degradation; glycolysis; pyruvate from D-glyceraldehyde 3-phosphate: step 3/5. Catalyzes the interconversion of 2-phosphoglycerate and 3-phosphoglycerate. This chain is 2,3-bisphosphoglycerate-independent phosphoglycerate mutase, found in Prunus dulcis (Almond).